The chain runs to 118 residues: Large ribosomal subunit protein bL19 (118 aa).

It belongs to the bacterial ribosomal protein bL19 family.

This protein is located at the 30S-50S ribosomal subunit interface and may play a role in the structure and function of the aminoacyl-tRNA binding site. The polypeptide is Large ribosomal subunit protein bL19 (Coprothermobacter proteolyticus (strain ATCC 35245 / DSM 5265 / OCM 4 / BT)).